We begin with the raw amino-acid sequence, 295 residues long: Acetylglutamate kinase (295 aa).

Substrate-binding positions include 66–67 (GG), R88, and N193.

The protein belongs to the acetylglutamate kinase family. ArgB subfamily.

The protein localises to the cytoplasm. The catalysed reaction is N-acetyl-L-glutamate + ATP = N-acetyl-L-glutamyl 5-phosphate + ADP. The protein operates within amino-acid biosynthesis; L-arginine biosynthesis; N(2)-acetyl-L-ornithine from L-glutamate: step 2/4. Functionally, catalyzes the ATP-dependent phosphorylation of N-acetyl-L-glutamate. This Rhizobium rhizogenes (strain K84 / ATCC BAA-868) (Agrobacterium radiobacter) protein is Acetylglutamate kinase.